The primary structure comprises 340 residues: uncharacterized protein (340 aa).

The Radical SAM core domain occupies 58–307 (AALPFRYTVN…PSYREMLRER (250 aa)). Residues Cys-72, Cys-76, and Cys-79 each coordinate [4Fe-4S] cluster. Helical transmembrane passes span 140 to 160 (YALM…LSIL) and 243 to 263 (QLLG…GLHL).

It depends on [4Fe-4S] cluster as a cofactor.

Its subcellular location is the cell membrane. This is an uncharacterized protein from Mycobacterium tuberculosis (strain CDC 1551 / Oshkosh).